The following is a 271-amino-acid chain: ATP synthase subunit a (271 aa).

5 consecutive transmembrane segments (helical) span residues 38 to 58 (FWTL…LFLV), 100 to 120 (LIAP…LMDL), 146 to 166 (DVNI…FYSI), 220 to 240 (LIFI…LNVP), and 242 to 262 (AIFH…LTIV).

Belongs to the ATPase A chain family. F-type ATPases have 2 components, CF(1) - the catalytic core - and CF(0) - the membrane proton channel. CF(1) has five subunits: alpha(3), beta(3), gamma(1), delta(1), epsilon(1). CF(0) has three main subunits: a(1), b(2) and c(9-12). The alpha and beta chains form an alternating ring which encloses part of the gamma chain. CF(1) is attached to CF(0) by a central stalk formed by the gamma and epsilon chains, while a peripheral stalk is formed by the delta and b chains.

The protein localises to the cell inner membrane. Its function is as follows. Key component of the proton channel; it plays a direct role in the translocation of protons across the membrane. In Salmonella choleraesuis (strain SC-B67), this protein is ATP synthase subunit a.